Here is a 260-residue protein sequence, read N- to C-terminus: MIRLVRELYQYRGLLISLVQRELKARYRGSFLGFLWTFLNPTLHMLVYVLLFTVVMRQNIPNFPFFMFVGLLPWIWFSTSVGGGASAISDRRDLLTKVRFPAQVLPTSVVVTNLCNFVLSLPLMLVLGMAYGQWPTWHVVLFPVVVLIQLTFTLALTYILAAINVTFRDLQHIVSNLLTLWFFATPVLYPLSTIQDESARSLMLALNPMVSLMTSYQAIFYEHRLPDAEPLMALAAVSVVLLWAASSIFESRREEFAESI.

Helical transmembrane passes span 31–51, 63–83, 109–129, 139–159, 173–193, 201–221, and 229–249; these read FLGFLWTFLNPTLHMLVYVLL, FPFFMFVGLLPWIWFSTSVGG, VVVTNLCNFVLSLPLMLVLGM, VVLFPVVVLIQLTFTLALTYI, IVSNLLTLWFFATPVLYPLST, SLMLALNPMVSLMTSYQAIFY, and EPLMALAAVSVVLLWAASSIF. In terms of domain architecture, ABC transmembrane type-2 spans 32–252; that stretch reads LGFLWTFLNP…WAASSIFESR (221 aa).

It belongs to the ABC-2 integral membrane protein family.

The protein resides in the cell inner membrane. Its function is as follows. May form an ATP-driven O-antigen export apparatus, in association with RfbB. This is O-antigen export system permease protein RfbA (rfbA) from Myxococcus xanthus.